A 231-amino-acid polypeptide reads, in one-letter code: MEKSERPLIKKKRPFRKKKRSFRKRRSPIESGHQIDFTNTSLLNQFISQQGKILPRKVTRLTLKQQRFMTSAIKQARILSLLPFVFDDKKVKKKQKEEFQKKQKEEFQKKQKEEFQKKQKEEFQKKQKEEFQKKQKEEFQKKQFQKKEFQRTKSTARTTNEKQTNEKQTKSTARTTNEKQTKSTARTTNEKQTKSTARTTNEKQTKSTARTTNEKQTKSNDRTTDLRTRKK.

Disordered stretches follow at residues 1 to 31 (MEKS…PIES) and 95 to 231 (QKEE…TRKK). A compositionally biased stretch (basic residues) spans 9 to 26 (IKKKRPFRKKKRSFRKRR). 3 stretches are compositionally biased toward basic and acidic residues: residues 95–151 (QKEE…EFQR), 159–169 (TNEKQTNEKQT), and 212–231 (TNEK…TRKK).

The protein belongs to the bacterial ribosomal protein bS18 family. In terms of assembly, part of the 30S ribosomal subunit.

The protein localises to the plastid. The protein resides in the chloroplast. This chain is Small ribosomal subunit protein bS18c, found in Jasminum nudiflorum (Winter jasmine).